Reading from the N-terminus, the 147-residue chain is Hemoglobin subunit gamma-2 (147 aa).

The 145-residue stretch at 3 to 147 (HFTEEDKATI…VASALSSRYH (145 aa)) folds into the Globin domain. Phosphothreonine is present on threonine 13. A phosphoserine mark is found at serine 45, serine 51, and serine 53. An N6-acetyllysine modification is found at lysine 60. Histidine 64 is a heme b binding site. Position 83 is an N6-acetyllysine (lysine 83). Histidine 93 lines the heme b pocket. Cysteine 94 is modified (S-nitrosocysteine). Phosphoserine is present on residues serine 140, serine 143, and serine 144.

This sequence belongs to the globin family. As to quaternary structure, heterotetramer of two alpha chains and two gamma chains in fetal hemoglobin (Hb F). In terms of tissue distribution, red blood cells.

Its function is as follows. Gamma chains make up the fetal hemoglobin F, in combination with alpha chains. The polypeptide is Hemoglobin subunit gamma-2 (HBG2) (Pongo pygmaeus (Bornean orangutan)).